A 373-amino-acid chain; its full sequence is Securin (373 aa).

Positions 1–10 (MMPANEDKEN) are enriched in basic and acidic residues. Positions 1-27 (MMPANEDKENNIVYTGNESSGINFPQT) are disordered. Residues 12 to 26 (IVYTGNESSGINFPQ) are compositionally biased toward polar residues. The D-box signature appears at 85–88 (RLPL). Residues 177 to 278 (ADSGKNEESS…LPYVPEGYSP (102 aa)) form a disordered region. A phosphoserine mark is found at serine 185, serine 186, serine 212, and serine 213. The span at 185-194 (SSDDDEGNED) shows a compositional bias: acidic residues. Low complexity predominate over residues 225–235 (LFNEQGGLQQL). Over residues 240-256 (TKNEQKTKNDKSDKTDD) the composition is skewed to basic and acidic residues. Serine 277 carries the post-translational modification Phosphoserine. Serine 292 bears the Phosphoserine; by CDC28 mark.

The protein belongs to the securin family. As to quaternary structure, interacts with the caspase-like ESP1, and prevents its protease activity probably by covering its active site. Interacts with CDC20. Phosphorylated by CDC28. The phosphorylation may be important for ESP1 localization to the nucleus. Post-translationally, ubiquitinated by the anaphase promoting complex (APC) at the onset of anaphase, conducting to its degradation.

The protein resides in the cytoplasm. The protein localises to the nucleus. Functionally, regulatory protein, which plays a central role in chromosome stability. Probably acts by blocking the action of key proteins. During the mitosis, it blocks Separase/ESP1 function, preventing the proteolysis of the cohesin complex and the subsequent segregation of the chromosomes. At the onset of anaphase, it is ubiquitinated, conducting to its destruction and to the liberation of ESP1. This chain is Securin (PDS1), found in Saccharomyces cerevisiae (strain ATCC 204508 / S288c) (Baker's yeast).